Consider the following 409-residue polypeptide: Cdc42 effector protein 1 (409 aa).

Residues 1 to 29 (MPGPQGGTGAPTMSLGKLSPVGWVSSSHG) form a disordered region. Serine 19 and serine 27 each carry phosphoserine. The residue at position 34 (threonine 34) is a Phosphothreonine. Residues 38–52 (ISPPLGDFRHTMHVG) form the CRIB domain. Serine 39 carries the post-translational modification Phosphoserine. Arginine 53 is subject to Omega-N-methylarginine. Serine 65, serine 77, serine 101, serine 113, serine 121, and serine 139 each carry phosphoserine. Basic and acidic residues predominate over residues 167-189 (PRVEKHSNRDRDRDPDHSQDREQ). Residues 167–203 (PRVEKHSNRDRDRDPDHSQDREQSSFPSEPTPNPELR) are disordered. Phosphoserine occurs at positions 191, 205, 207, and 210. A run of 3 repeats spans residues 235-241 (PAAETPV), 242-248 (PTANPPA), and 255-261 (PTAKPPA). Residues 235–284 (PAAETPVPTANPPAPAANPAPTAKPPAHAITTLDAVTSLPASAVTSLPAP) form a 3 X 7 AA tandem repeats of [PT]-[AT]-A-[ENT]-[PT]-[PTS]-[AG] region. 2 disordered regions span residues 237-260 (AETPVPTANPPAPAANPAPTAKPP) and 282-329 (PAPA…FDRH). Over residues 243–258 (TANPPAPAANPAPTAK) the composition is skewed to pro residues. Residues 282–291 (PAPAAASSPS) show a composition bias toward low complexity. 4 positions are modified to phosphoserine: serine 312, serine 332, serine 368, and serine 371.

Belongs to the BORG/CEP family. As to quaternary structure, interacts with RHOQ and CDC42, in a GTP-dependent manner.

It is found in the endomembrane system. The protein localises to the cytoplasm. Its subcellular location is the cytoskeleton. In terms of biological role, probably involved in the organization of the actin cytoskeleton. Induced membrane extensions in fibroblasts. This Mus musculus (Mouse) protein is Cdc42 effector protein 1 (Cdc42ep1).